We begin with the raw amino-acid sequence, 169 residues long: 6,7-dimethyl-8-ribityllumazine synthase (169 aa).

5-amino-6-(D-ribitylamino)uracil is bound by residues F24, 58 to 60 (ALE), and 82 to 84 (AVV). 87–88 (ET) contacts (2S)-2-hydroxy-3-oxobutyl phosphate. The Proton donor role is filled by H90. N115 contacts 5-amino-6-(D-ribitylamino)uracil. R129 contributes to the (2S)-2-hydroxy-3-oxobutyl phosphate binding site.

It belongs to the DMRL synthase family.

It carries out the reaction (2S)-2-hydroxy-3-oxobutyl phosphate + 5-amino-6-(D-ribitylamino)uracil = 6,7-dimethyl-8-(1-D-ribityl)lumazine + phosphate + 2 H2O + H(+). It functions in the pathway cofactor biosynthesis; riboflavin biosynthesis; riboflavin from 2-hydroxy-3-oxobutyl phosphate and 5-amino-6-(D-ribitylamino)uracil: step 1/2. Functionally, catalyzes the formation of 6,7-dimethyl-8-ribityllumazine by condensation of 5-amino-6-(D-ribitylamino)uracil with 3,4-dihydroxy-2-butanone 4-phosphate. This is the penultimate step in the biosynthesis of riboflavin. The sequence is that of 6,7-dimethyl-8-ribityllumazine synthase from Cupriavidus metallidurans (strain ATCC 43123 / DSM 2839 / NBRC 102507 / CH34) (Ralstonia metallidurans).